Here is a 772-residue protein sequence, read N- to C-terminus: DPSKSFDSAIYPDRKMIVFLFAEDSGRGTYAITQDGVFATIVATVKSAAAAPITLLEVGAFRDNDLVEISTTFVAGGVNLGSSVPTTQPNVPSDGVVVEIGKVTGSVGTTVEIPVYFRGVPSKGIANCDFVFRYDPNVLEIIGIDPRSIIVDPNPTKSFDTAIYADRKIIVFLFCGRQRNRSVSITKDGVFAKIRATVKSSAPAYITFDEVGGFADNDLVEQKVSFIDGGVNVGNATPTKGATPTNTATPTKSATATPPGHSVPTNTPTNTPANTPVSGNLKVEFYNSNPSDTTNSINPQFKVTNTGSSAIDLSKLTLRYYYTVDGQKDQTFWCDHAAIIGSNGSYNGITSNVKGTFVKMSSSTNNADTYLEISFTGGTLEPGAHVQIQGRFAKNDWSNYTQSNDYSFKSRSQFVEWDQVTAYLNGVLVWGKEPGGSVVPSTQPVTTPPATTKPPATTIPPSDDPNAIKIKVDTVNAKPGDTVNIPVRFSGIPSKGIANCDFVYSYDPNVLEIIEIKPGELIVDPNPDKSFDTAVYPDRKMIVFLFAEDSGTGAYAITEDGVFATIVAKVKEGAPEGFSAIEISEFGAFADNDLVEVETDLINGGVLVTNKPVIEGYKVSGYILPDFSFDATVAPLVKAGFKVEIVGTELYAVTDANGYFEITGVPANASGYTLKISRATYLDRVIANVVVTGDTSVSTSQAPIMMWVGDIVKDNSINLLDVAEVIRCFNATKGSANYVEELDINRNGAINMQDIMIVHKHFGATSSDYDAQ.

The Cohesin 1 domain occupies 1–80 (DPSKSFDSAI…TTFVAGGVNL (80 aa)). A linker (Pro/Thr-rich) region spans residues 81–93 (GSSVPTTQPNVPS). Residues 94–240 (DGVVVEIGKV…VNVGNATPTK (147 aa)) enclose the Cohesin 2 domain. The span at 235 to 276 (NATPTKGATPTNTATPTKSATATPPGHSVPTNTPTNTPANTP) shows a compositional bias: low complexity. 2 disordered regions span residues 235–277 (NATP…NTPV) and 438–464 (VVPS…PSDD). Residues 241–272 (GATPTNTATPTKSATATPPGHSVPTNTPTNTP) are linker (Pro/Thr-rich). Residues 277 to 435 (VSGNLKVEFY…GVLVWGKEPG (159 aa)) form the CBM3 domain. Positions 438–461 (VVPSTQPVTTPPATTKPPATTIPP) are enriched in low complexity. The linker (Pro/Thr-rich) stretch occupies residues 440–461 (PSTQPVTTPPATTKPPATTIPP). A Cohesin 3 domain is found at 462 to 607 (SDDPNAIKIK…ETDLINGGVL (146 aa)). In terms of domain architecture, Dockerin spans 704–771 (IMMWVGDIVK…FGATSSDYDA (68 aa)).

O-glycosylated on most but not all Thr residues of the linker units.

Its subcellular location is the secreted. Functionally, acts as a scaffolding protein in the cellulosome. It promotes binding of cellulose to the catalytic domains of the cellulolytic enzymes probably through the binding of the nine repeated domains with dockerin domains present in catalytic subunits of the cellulosome. The protein is Cellulosomal-scaffolding protein B (cipB) of Acetivibrio thermocellus (Hungateiclostridium thermocellum).